The sequence spans 284 residues: 2-dehydro-3-deoxyphosphooctonate aldolase (284 aa).

It belongs to the KdsA family.

The protein localises to the cytoplasm. The catalysed reaction is D-arabinose 5-phosphate + phosphoenolpyruvate + H2O = 3-deoxy-alpha-D-manno-2-octulosonate-8-phosphate + phosphate. It functions in the pathway carbohydrate biosynthesis; 3-deoxy-D-manno-octulosonate biosynthesis; 3-deoxy-D-manno-octulosonate from D-ribulose 5-phosphate: step 2/3. The protein operates within bacterial outer membrane biogenesis; lipopolysaccharide biosynthesis. The sequence is that of 2-dehydro-3-deoxyphosphooctonate aldolase from Burkholderia vietnamiensis (strain G4 / LMG 22486) (Burkholderia cepacia (strain R1808)).